The following is a 1176-amino-acid chain: Pesticidal crystal protein Cry1Aa (1176 aa).

This sequence belongs to the delta endotoxin family.

In terms of biological role, promotes colloidosmotic lysis by binding to the midgut epithelial cells of many lepidopteran larvae. The chain is Pesticidal crystal protein Cry1Aa (cry1Aa) from Bacillus thuringiensis subsp. entomocidus.